The sequence spans 488 residues: MIPVVALVGRPNVGKSTLFNRLTRTRDALVADFPGLTRDRKYGRAFLSGYEFIVVDTGGIDGTEEGIETKMAEQSLAAIEEADVVLFMTDARAGLTAADLSIAQHLRSREKTTFVVANKVDGIDADSACAEFWSLGLGEVYQMAASQGRGVTNMIEYALTPYAEAMGIVRQGEDEVTEEREYTEEEAEAEQKRLQDLPIKLAIIGKPNVGKSTLTNRILGEERVVVFDEPGTTRDSIYIPMEREGREYVIIDTAGVRRRSKVHQVIEKFSVIKTLKAVEDANVVLLIIDAREGIAEQDLGLLGFALNAGRALVIAVNKWDGIDQGIKDRVKSELDRRLGFIDFARIHFISALHGTGVGHLFESIEEAYDSATRRVSTSMLTRIMQMSQDDHQPPLVNGRRVKLKYAHAGGYNPPIVVIHGNQVSKLPDSYKRYMMNYFRRSLKVVGTPIQLRFQEGDNPFENKTEKLTMSQERRRKRAQSHIKDRKTK.

2 EngA-type G domains span residues proline 3–methionine 166 and isoleucine 199–threonine 372. GTP contacts are provided by residues glycine 9–serine 16, aspartate 56–isoleucine 60, asparagine 118–aspartate 121, glycine 205–serine 212, aspartate 252–valine 256, and asparagine 317–aspartate 320. One can recognise a KH-like domain in the interval arginine 373–aspartate 457. Residues phenylalanine 460–lysine 488 form a disordered region. A compositionally biased stretch (basic residues) spans arginine 473–lysine 488.

This sequence belongs to the TRAFAC class TrmE-Era-EngA-EngB-Septin-like GTPase superfamily. EngA (Der) GTPase family. In terms of assembly, associates with the 50S ribosomal subunit.

In terms of biological role, GTPase that plays an essential role in the late steps of ribosome biogenesis. The polypeptide is GTPase Der (Shewanella baltica (strain OS155 / ATCC BAA-1091)).